The following is a 287-amino-acid chain: PsbP domain-containing protein 1, chloroplastic (287 aa).

The protein belongs to the PsbP family. Partially associated with photosystem I (PSI) complex, but is not a subunit of the complex. Interacts with PsaA and PsaB, but not with PasF.

It localises to the plastid. The protein localises to the chloroplast thylakoid lumen. Photosystem I assembly factor that assists the proper folding and integration of PsaB and PsaA into the thylakoid membrane. This Arabidopsis thaliana (Mouse-ear cress) protein is PsbP domain-containing protein 1, chloroplastic (PPD1).